The following is a 485-amino-acid chain: Rhamnulokinase (485 aa).

An ATP-binding site is contributed by 8–12 (ASSGR). Residues glycine 78 and 231 to 233 (HDT) each bind substrate. The active-site Proton acceptor is the aspartate 232. ATP is bound at residue threonine 254. Asparagine 291 contributes to the substrate binding site. Residue glutamine 299 coordinates ATP. Cysteine 348 and cysteine 365 are oxidised to a cystine. ATP is bound at residue glycine 397. The cysteines at positions 408 and 412 are disulfide-linked.

The protein belongs to the rhamnulokinase family. Requires Mg(2+) as cofactor.

The catalysed reaction is L-rhamnulose + ATP = L-rhamnulose 1-phosphate + ADP + H(+). It functions in the pathway carbohydrate degradation; L-rhamnose degradation; glycerone phosphate from L-rhamnose: step 2/3. Its function is as follows. Involved in the catabolism of L-rhamnose (6-deoxy-L-mannose). Catalyzes the transfer of the gamma-phosphate group from ATP to the 1-hydroxyl group of L-rhamnulose to yield L-rhamnulose 1-phosphate. This is Rhamnulokinase from Yersinia pestis bv. Antiqua (strain Antiqua).